The chain runs to 190 residues: Segregation and condensation protein B (190 aa).

This sequence belongs to the ScpB family. Homodimer. Homodimerization may be required to stabilize the binding of ScpA to the Smc head domains. Component of a cohesin-like complex composed of ScpA, ScpB and the Smc homodimer, in which ScpA and ScpB bind to the head domain of Smc. The presence of the three proteins is required for the association of the complex with DNA.

It localises to the cytoplasm. Its function is as follows. Participates in chromosomal partition during cell division. May act via the formation of a condensin-like complex containing Smc and ScpA that pull DNA away from mid-cell into both cell halves. This chain is Segregation and condensation protein B, found in Bacillus cereus (strain ZK / E33L).